Here is a 273-residue protein sequence, read N- to C-terminus: 2,3,4,5-tetrahydropyridine-2,6-dicarboxylate N-succinyltransferase (273 aa).

Residues Arg-104 and Asp-141 each contribute to the substrate site.

The protein belongs to the transferase hexapeptide repeat family. Homotrimer.

It is found in the cytoplasm. It carries out the reaction (S)-2,3,4,5-tetrahydrodipicolinate + succinyl-CoA + H2O = (S)-2-succinylamino-6-oxoheptanedioate + CoA. Its pathway is amino-acid biosynthesis; L-lysine biosynthesis via DAP pathway; LL-2,6-diaminopimelate from (S)-tetrahydrodipicolinate (succinylase route): step 1/3. The protein is 2,3,4,5-tetrahydropyridine-2,6-dicarboxylate N-succinyltransferase of Nitrosospira multiformis (strain ATCC 25196 / NCIMB 11849 / C 71).